A 127-amino-acid polypeptide reads, in one-letter code: Small ribosomal subunit protein uS12 (127 aa).

Residue aspartate 89 is modified to 3-methylthioaspartic acid. The interval 101–127 (ALDTSGVAGRTQRRSKYGAKRPKEAKK) is disordered. Residues 111-127 (TQRRSKYGAKRPKEAKK) show a composition bias toward basic residues.

This sequence belongs to the universal ribosomal protein uS12 family. In terms of assembly, part of the 30S ribosomal subunit. Contacts proteins S8 and S17. May interact with IF1 in the 30S initiation complex.

With S4 and S5 plays an important role in translational accuracy. Functionally, interacts with and stabilizes bases of the 16S rRNA that are involved in tRNA selection in the A site and with the mRNA backbone. Located at the interface of the 30S and 50S subunits, it traverses the body of the 30S subunit contacting proteins on the other side and probably holding the rRNA structure together. The combined cluster of proteins S8, S12 and S17 appears to hold together the shoulder and platform of the 30S subunit. In Flavobacterium johnsoniae (strain ATCC 17061 / DSM 2064 / JCM 8514 / BCRC 14874 / CCUG 350202 / NBRC 14942 / NCIMB 11054 / UW101) (Cytophaga johnsonae), this protein is Small ribosomal subunit protein uS12.